Here is a 190-residue protein sequence, read N- to C-terminus: Elongation factor P (190 aa).

Position 34 is an N6-(3,6-diaminohexanoyl)-5-hydroxylysine (lysine 34).

It belongs to the elongation factor P family. In terms of processing, may be beta-lysylated on the epsilon-amino group of Lys-34 by the combined action of EpmA and EpmB, and then hydroxylated on the C5 position of the same residue by EpmC (if this protein is present). Lysylation is critical for the stimulatory effect of EF-P on peptide-bond formation. The lysylation moiety may extend toward the peptidyltransferase center and stabilize the terminal 3-CCA end of the tRNA. Hydroxylation of the C5 position on Lys-34 may allow additional potential stabilizing hydrogen-bond interactions with the P-tRNA.

Its subcellular location is the cytoplasm. Its pathway is protein biosynthesis; polypeptide chain elongation. In terms of biological role, involved in peptide bond synthesis. Alleviates ribosome stalling that occurs when 3 or more consecutive Pro residues or the sequence PPG is present in a protein, possibly by augmenting the peptidyl transferase activity of the ribosome. Modification of Lys-34 is required for alleviation. This Psychrobacter arcticus (strain DSM 17307 / VKM B-2377 / 273-4) protein is Elongation factor P.